A 75-amino-acid chain; its full sequence is Metallothionein-like protein 1 (75 aa).

The protein belongs to the metallothionein superfamily. Type 15 family.

Its function is as follows. Metallothioneins have a high content of cysteine residues that bind various heavy metals. The chain is Metallothionein-like protein 1 (MTA) from Pisum sativum (Garden pea).